Consider the following 217-residue polypeptide: Glycerol-3-phosphate acyltransferase (217 aa).

Transmembrane regions (helical) follow at residues 3 to 23, 56 to 76, 78 to 98, 120 to 140, 142 to 162, and 163 to 183; these read IVIL…VWIG, VLLM…LFGL, GVNP…PIFA, FFIY…MVSL, SMIS…TVPA, and ILPT…TFIF.

This sequence belongs to the PlsY family. As to quaternary structure, probably interacts with PlsX.

Its subcellular location is the cell membrane. It carries out the reaction an acyl phosphate + sn-glycerol 3-phosphate = a 1-acyl-sn-glycero-3-phosphate + phosphate. It participates in lipid metabolism; phospholipid metabolism. Its function is as follows. Catalyzes the transfer of an acyl group from acyl-phosphate (acyl-PO(4)) to glycerol-3-phosphate (G3P) to form lysophosphatidic acid (LPA). This enzyme utilizes acyl-phosphate as fatty acyl donor, but not acyl-CoA or acyl-ACP. This chain is Glycerol-3-phosphate acyltransferase, found in Enterococcus faecalis (strain ATCC 700802 / V583).